The primary structure comprises 366 residues: tRNA/tmRNA (uracil-C(5))-methyltransferase (366 aa).

Q190, Y218, N223, E239, and D299 together coordinate S-adenosyl-L-methionine. Residue C324 is the Nucleophile of the active site. E358 (proton acceptor) is an active-site residue.

This sequence belongs to the class I-like SAM-binding methyltransferase superfamily. RNA M5U methyltransferase family. TrmA subfamily.

The enzyme catalyses uridine(54) in tRNA + S-adenosyl-L-methionine = 5-methyluridine(54) in tRNA + S-adenosyl-L-homocysteine + H(+). The catalysed reaction is uridine(341) in tmRNA + S-adenosyl-L-methionine = 5-methyluridine(341) in tmRNA + S-adenosyl-L-homocysteine + H(+). Functionally, dual-specificity methyltransferase that catalyzes the formation of 5-methyluridine at position 54 (m5U54) in all tRNAs, and that of position 341 (m5U341) in tmRNA (transfer-mRNA). In Escherichia fergusonii (strain ATCC 35469 / DSM 13698 / CCUG 18766 / IAM 14443 / JCM 21226 / LMG 7866 / NBRC 102419 / NCTC 12128 / CDC 0568-73), this protein is tRNA/tmRNA (uracil-C(5))-methyltransferase.